Consider the following 263-residue polypeptide: Metaxin-2 (263 aa).

Residue Ser2 is modified to N-acetylserine.

The protein belongs to the metaxin family. In terms of assembly, interacts with MTX1/metaxin-1. Associates with the mitochondrial contact site and cristae organizing system (MICOS) complex, composed of at least MICOS10/MIC10, CHCHD3/MIC19, CHCHD6/MIC25, APOOL/MIC27, IMMT/MIC60, APOO/MIC23/MIC26 and QIL1/MIC13. This complex was also known under the names MINOS or MitOS complex. The MICOS complex associates with mitochondrial outer membrane proteins SAMM50, MTX1 and MTX2 (together described as components of the mitochondrial outer membrane sorting assembly machinery (SAM) complex) and DNAJC11, mitochondrial inner membrane protein TMEM11 and with HSPA9. The MICOS and SAM complexes together with DNAJC11 are part of a large protein complex spanning both membranes termed the mitochondrial intermembrane space bridging (MIB) complex.

The protein localises to the mitochondrion outer membrane. It is found in the mitochondrion. In terms of biological role, involved in transport of proteins into the mitochondrion. In Mus musculus (Mouse), this protein is Metaxin-2 (Mtx2).